Here is a 320-residue protein sequence, read N- to C-terminus: tRNA-cytidine(32) 2-sulfurtransferase (320 aa).

A PP-loop motif motif is present at residues S54 to S59. Positions 129, 132, and 220 each coordinate [4Fe-4S] cluster.

The protein belongs to the TtcA family. Homodimer. Requires Mg(2+) as cofactor. [4Fe-4S] cluster is required as a cofactor.

The protein localises to the cytoplasm. The catalysed reaction is cytidine(32) in tRNA + S-sulfanyl-L-cysteinyl-[cysteine desulfurase] + AH2 + ATP = 2-thiocytidine(32) in tRNA + L-cysteinyl-[cysteine desulfurase] + A + AMP + diphosphate + H(+). The protein operates within tRNA modification. Functionally, catalyzes the ATP-dependent 2-thiolation of cytidine in position 32 of tRNA, to form 2-thiocytidine (s(2)C32). The sulfur atoms are provided by the cysteine/cysteine desulfurase (IscS) system. This is tRNA-cytidine(32) 2-sulfurtransferase from Bordetella parapertussis (strain 12822 / ATCC BAA-587 / NCTC 13253).